Here is a 249-residue protein sequence, read N- to C-terminus: Proteasome activator complex subunit 1 (249 aa).

The disordered stretch occupies residues 55–102 (SNLKAPLDIPVPDPVKEKEKEERRKQQEKEDKDEKKKGEDEDKGPPCG). A compositionally biased stretch (basic and acidic residues) spans 68–98 (PVKEKEKEERRKQQEKEDKDEKKKGEDEDKG).

This sequence belongs to the PA28 family. As to quaternary structure, heterodimer of PSME1 and PSME2, which forms a hexameric ring. PSME1 can form homoheptamers.

Functionally, implicated in immunoproteasome assembly and required for efficient antigen processing. The PA28 activator complex enhances the generation of class I binding peptides by altering the cleavage pattern of the proteasome. This chain is Proteasome activator complex subunit 1 (PSME1), found in Bos taurus (Bovine).